We begin with the raw amino-acid sequence, 388 residues long: Histone H2A.Y (388 aa).

LRR repeat units follow at residues 54 to 75 (SLQM…PHVP), 76 to 96 (SLIR…QYLR), and 100 to 121 (HLQT…KRLG). Residues 134 to 172 (NPVVNTNNYRNLVFNLFPSLVILDTLDKNGIDQEKAALD) enclose the LRRCT domain. The interval 256–279 (RKAPASRNGGVPSKAGKGKMNAFS) is disordered.

This sequence belongs to the histone H2A family. As to quaternary structure, the nucleosome is a histone octamer containing two molecules each of H2A, H2B, H3 and H4 assembled in one H3-H4 heterotetramer and two H2A-H2B heterodimers. The octamer wraps approximately 147 bp of DNA.

Its subcellular location is the nucleus. The protein resides in the chromosome. In terms of biological role, variant histone H2A which replaces conventional H2A in a subset of nucleosomes. Nucleosomes wrap and compact DNA into chromatin, limiting DNA accessibility to the cellular machineries which require DNA as a template. Histones thereby play a central role in transcription regulation, DNA repair, DNA replication and chromosomal stability. DNA accessibility is regulated via a complex set of post-translational modifications of histones, also called histone code, and nucleosome remodeling. The chain is Histone H2A.Y (HTAY) from Tetrahymena thermophila (strain SB210).